Consider the following 307-residue polypeptide: 4-hydroxybenzoate geranyltransferase 1 (307 aa).

The next 8 membrane-spanning stretches (helical) occupy residues 38–58, 62–82, 120–140, 154–174, 179–199, 230–250, 252–272, and 286–306; these read PIGSWLLAWPAFWSVALAADL, PKMLAIFGWWAVWIRGAGCTI, LFIGLGVLYQFNVLTLALAIV, ITYWPQAFLGVMISWGALLGS, GSVVPSIAYPLYISSFFWTLV, MWISWFGVGCIAALVIGGLIL, IGLPYYVFVAIATGQLVWQIF, and FVSNQWFGAIIFTGILLGRLF.

This sequence belongs to the UbiA prenyltransferase family. Requires Mg(2+) as cofactor. Expressed only in roots.

The protein localises to the endoplasmic reticulum membrane. It carries out the reaction 4-hydroxybenzoate + (2E)-geranyl diphosphate = 3-geranyl-4-hydroxybenzoate + diphosphate. Prenyltransferase involved in the biosynthesis of shikonin, a naphthoquinone secondary metabolite. Could accept only geranyl diphosphate and not dimethylallyl diphosphate, farnesyl diphosphate, or geranylgeranyl diphosphate as substrate. This chain is 4-hydroxybenzoate geranyltransferase 1 (PGT-1), found in Lithospermum erythrorhizon (Purple gromwell).